The chain runs to 149 residues: Nucleoside diphosphate kinase (149 aa).

ATP contacts are provided by Lys-9, Phe-57, Arg-85, Thr-91, Arg-102, and Asn-112. The active-site Pros-phosphohistidine intermediate is His-115.

The protein belongs to the NDK family. Homotetramer. Requires Mg(2+) as cofactor.

Its subcellular location is the cytoplasm. It catalyses the reaction a 2'-deoxyribonucleoside 5'-diphosphate + ATP = a 2'-deoxyribonucleoside 5'-triphosphate + ADP. The catalysed reaction is a ribonucleoside 5'-diphosphate + ATP = a ribonucleoside 5'-triphosphate + ADP. Functionally, major role in the synthesis of nucleoside triphosphates other than ATP. The ATP gamma phosphate is transferred to the NDP beta phosphate via a ping-pong mechanism, using a phosphorylated active-site intermediate. The sequence is that of Nucleoside diphosphate kinase from Roseiflexus castenholzii (strain DSM 13941 / HLO8).